The chain runs to 427 residues: Zinc finger protein DPF3 (427 aa).

The tract at residues 182-244 is disordered; sequence LENDENADEV…NDAASQDDHD (63 aa). A compositionally biased stretch (acidic residues) spans 184–199; it reads NDENADEVNEEEDLEE. The segment covering 233–244 has biased composition (basic and acidic residues); the sequence is RRNDAASQDDHD. A C2H2-type zinc finger spans residues 247–270; that stretch reads YVCDICGKRYKNRPGLSYHYAHTH. A disordered region spans residues 272 to 301; it reads ASEEGDEAREQETRSSPVHRNENHKPQKGP. Positions 279–296 are enriched in basic and acidic residues; it reads AREQETRSSPVHRNENHK. 2 consecutive PHD-type zinc fingers follow at residues 308–368 and 365–415; these read NNYC…CKSC and CKSC…CREL.

Belongs to the requiem/DPF family. Component of the BAF complex. Interacts with acetylated histones H3 and H4. Component of neuron-specific chromatin remodeling complex (nBAF complex), a subfamily of ATP-dependent SWI/SNF chromatin remodeling complexes. In terms of tissue distribution, expressed in the heart and somites.

Its subcellular location is the nucleus. Its function is as follows. Muscle-specific component of the BAF complex, a multiprotein complex involved in transcriptional activation and repression of select genes by chromatin remodeling (alteration of DNA-nucleosome topology). Specifically binds acetylated lysines on histone 3 and 4. In the complex, it acts as a tissue-specific anchor between histone acetylations and methylations and chromatin remodeling. It thereby probably plays an essential role in heart and skeletal muscle development. Belongs to the neuron-specific chromatin remodeling complex (nBAF complex) and plays a role in neural development. This Gallus gallus (Chicken) protein is Zinc finger protein DPF3 (DPF3).